A 264-amino-acid polypeptide reads, in one-letter code: 3-methyl-2-oxobutanoate hydroxymethyltransferase (264 aa).

Residues aspartate 45 and aspartate 84 each coordinate Mg(2+). Residues 45–46, aspartate 84, and lysine 112 each bind 3-methyl-2-oxobutanoate; that span reads DS. Glutamate 114 serves as a coordination point for Mg(2+). The active-site Proton acceptor is glutamate 181.

The protein belongs to the PanB family. In terms of assembly, homodecamer; pentamer of dimers. Mg(2+) is required as a cofactor.

It localises to the cytoplasm. It catalyses the reaction 3-methyl-2-oxobutanoate + (6R)-5,10-methylene-5,6,7,8-tetrahydrofolate + H2O = 2-dehydropantoate + (6S)-5,6,7,8-tetrahydrofolate. It participates in cofactor biosynthesis; (R)-pantothenate biosynthesis; (R)-pantoate from 3-methyl-2-oxobutanoate: step 1/2. In terms of biological role, catalyzes the reversible reaction in which hydroxymethyl group from 5,10-methylenetetrahydrofolate is transferred onto alpha-ketoisovalerate to form ketopantoate. The sequence is that of 3-methyl-2-oxobutanoate hydroxymethyltransferase from Escherichia coli O17:K52:H18 (strain UMN026 / ExPEC).